The sequence spans 453 residues: Tryptophan biosynthesis protein TrpCF (453 aa).

An indole-3-glycerol phosphate synthase region spans residues 1–257 (MMQTVLAKIV…AAVRRVLLGE (257 aa)). Residues 258 to 453 (NKVCGLTRGQ…ASVFQTLRAY (196 aa)) are N-(5'-phosphoribosyl)anthranilate isomerase.

In the N-terminal section; belongs to the TrpC family. It in the C-terminal section; belongs to the TrpF family. Monomer.

The catalysed reaction is N-(5-phospho-beta-D-ribosyl)anthranilate = 1-(2-carboxyphenylamino)-1-deoxy-D-ribulose 5-phosphate. It carries out the reaction 1-(2-carboxyphenylamino)-1-deoxy-D-ribulose 5-phosphate + H(+) = (1S,2R)-1-C-(indol-3-yl)glycerol 3-phosphate + CO2 + H2O. Its pathway is amino-acid biosynthesis; L-tryptophan biosynthesis; L-tryptophan from chorismate: step 3/5. It functions in the pathway amino-acid biosynthesis; L-tryptophan biosynthesis; L-tryptophan from chorismate: step 4/5. Its function is as follows. Bifunctional enzyme that catalyzes two sequential steps of tryptophan biosynthetic pathway. The first reaction is catalyzed by the isomerase, coded by the TrpF domain; the second reaction is catalyzed by the synthase, coded by the TrpC domain. The protein is Tryptophan biosynthesis protein TrpCF (trpC) of Escherichia coli O157:H7.